Consider the following 715-residue polypeptide: MIYQGETLSVSYLENGIAELRFDAPGSVNKLDRATLLSLSEAIAALQQQADLKGLILTSGKDAFIVGADITEFLELFDLPQEDLLGWLKKANDIFSAIEDLPVPTLSAIKGHALGGGCETILSTDFRLADTSAKIGLPETKLGIMPGFGGTVRLPRVIGADNALEWITTGKDYRADDALKVGAIDAVVAPDALHSAAVQMMKDAIAGKLNWQSRRAAKKAPLRLSKLEAMMSFSTAAGMVAAVAGKHYPAPMTAVKTVEAAAGMSRDEALVVEAQGFIKLAKTDVAKALVGIFLNDQHIKALAKKAAKQAAKATRHAAVLGAGIMGGGIAYQSASKGIPAVMKDINEKALALGMGEATKLLNGQLEKGRIDGIKMGQVLSAITPTLSYDNVKHVDLVVEAVVENPKVKAAVLGEVEGIIGDDAVLASNTSTIPISLLAKGLKRPQNFCGMHFFNPVHRMPLVEIIRGEQTSDETINRVVAYAAAMGKSPVVVNDCPGFFVNRVLFPYFFGFNKLVADGADFAAVDKVMEKEFGWPMGPAYLLDVVGIDTGHHAGDVMAQGFPARMSKEGRTAIDVMYDASRFGQKNGKGFYAYEQDKKGKPKKVADVAAYELLAPIAKPKQDFDKEAIIAGMMIPMINEVVLCLEEGIVATPAEADIALVYGLGFPPFRGGVFRYLDTIGLDRYVAMADQYADLGPLYRVSDRLREMAAQGKTFY.

An enoyl-CoA hydratase/isomerase region spans residues 1–189; sequence MIYQGETLSV…KVGAIDAVVA (189 aa). Substrate is bound at residue Asp-296. Residues 311–715 are 3-hydroxyacyl-CoA dehydrogenase; it reads AKATRHAAVL…EMAAQGKTFY (405 aa). NAD(+)-binding positions include Met-325, Asp-344, 401-403, Lys-408, and Ser-430; that span reads VVE. The active-site For 3-hydroxyacyl-CoA dehydrogenase activity is His-451. Asn-454 provides a ligand contact to NAD(+). Substrate is bound by residues Asn-501 and Tyr-661.

In the N-terminal section; belongs to the enoyl-CoA hydratase/isomerase family. The protein in the C-terminal section; belongs to the 3-hydroxyacyl-CoA dehydrogenase family. Heterotetramer of two alpha chains (FadB) and two beta chains (FadA).

The catalysed reaction is a (3S)-3-hydroxyacyl-CoA + NAD(+) = a 3-oxoacyl-CoA + NADH + H(+). It catalyses the reaction a (3S)-3-hydroxyacyl-CoA = a (2E)-enoyl-CoA + H2O. The enzyme catalyses a 4-saturated-(3S)-3-hydroxyacyl-CoA = a (3E)-enoyl-CoA + H2O. It carries out the reaction (3S)-3-hydroxybutanoyl-CoA = (3R)-3-hydroxybutanoyl-CoA. The catalysed reaction is a (3Z)-enoyl-CoA = a 4-saturated (2E)-enoyl-CoA. It catalyses the reaction a (3E)-enoyl-CoA = a 4-saturated (2E)-enoyl-CoA. It participates in lipid metabolism; fatty acid beta-oxidation. Involved in the aerobic and anaerobic degradation of long-chain fatty acids via beta-oxidation cycle. Catalyzes the formation of 3-oxoacyl-CoA from enoyl-CoA via L-3-hydroxyacyl-CoA. It can also use D-3-hydroxyacyl-CoA and cis-3-enoyl-CoA as substrate. The polypeptide is Fatty acid oxidation complex subunit alpha (Aeromonas salmonicida (strain A449)).